A 393-amino-acid polypeptide reads, in one-letter code: Formate-dependent phosphoribosylglycinamide formyltransferase (393 aa).

Residues 22–23 (EL) and Glu-82 contribute to the N(1)-(5-phospho-beta-D-ribosyl)glycinamide site. ATP-binding positions include Arg-114, Lys-155, 160 to 165 (SSGKGQ), 195 to 198 (EGLV), and Glu-203. The ATP-grasp domain maps to 119–308 (LLAAETLQLP…EFALHVRAFL (190 aa)). Residues Glu-267 and Glu-279 each coordinate Mg(2+). Residues Asp-286, Lys-355, and 362 to 363 (RR) each bind N(1)-(5-phospho-beta-D-ribosyl)glycinamide.

Belongs to the PurK/PurT family. Homodimer.

It carries out the reaction N(1)-(5-phospho-beta-D-ribosyl)glycinamide + formate + ATP = N(2)-formyl-N(1)-(5-phospho-beta-D-ribosyl)glycinamide + ADP + phosphate + H(+). The protein operates within purine metabolism; IMP biosynthesis via de novo pathway; N(2)-formyl-N(1)-(5-phospho-D-ribosyl)glycinamide from N(1)-(5-phospho-D-ribosyl)glycinamide (formate route): step 1/1. In terms of biological role, involved in the de novo purine biosynthesis. Catalyzes the transfer of formate to 5-phospho-ribosyl-glycinamide (GAR), producing 5-phospho-ribosyl-N-formylglycinamide (FGAR). Formate is provided by PurU via hydrolysis of 10-formyl-tetrahydrofolate. The polypeptide is Formate-dependent phosphoribosylglycinamide formyltransferase (Yersinia enterocolitica serotype O:8 / biotype 1B (strain NCTC 13174 / 8081)).